Consider the following 250-residue polypeptide: Kv channel-interacting protein 4 (250 aa).

Residues 2–44 (NVRRVESISAQLEEASSTGGFLYTQNSTKRSIKERLMKLLPCS) form a KIS region. 2 positions are modified to phosphoserine: S17 and S56. An EF-hand 1; degenerate domain is found at 61–117 (LEMATVRHRPEALELLEAQSKFTKKELQILYRGFKNECPSGVVNEDTFKEIYSQFFP). 3 EF-hand domains span residues 120–155 (DSTT…LLRG), 156–191 (TVQE…IYDM), and 204–239 (APRQ…DENI). D133, D135, N137, D144, D169, N171, D173, Y175, E180, D217, N219, D221, and E228 together coordinate Ca(2+). The tract at residues 237–250 (ENIMRSMQLFENVI) is interaction with KCND2.

This sequence belongs to the recoverin family. In terms of assembly, component of heteromultimeric potassium channels. Identified in potassium channel complexes containing KCND1, KCND2, KCND3, KCNIP1, KCNIP2, KCNIP3, KCNIP4, DPP6 and DPP10. Interacts with KCND2. Interacts with KCND3. Interacts with the C-terminus of PSEN2 and probably PSEN1.

The protein localises to the cell membrane. It localises to the cytoplasm. The protein resides in the peroxisome. Functionally, regulatory subunit of Kv4/D (Shal)-type voltage-gated rapidly inactivating A-type potassium channels. Modulates KCND2 channel density, inactivation kinetics and rate of recovery from inactivation in a calcium-dependent and isoform-specific manner. Modulates KCND3/Kv4.3 currents. Isoform 4 does not increase KCND2 expression at the cell membrane. Isoform 4 retains KCND3 in the endoplasmic reticulum and negatively regulates its expression at the cell membrane. The sequence is that of Kv channel-interacting protein 4 (KCNIP4) from Bos taurus (Bovine).